A 1299-amino-acid chain; its full sequence is DNA-directed RNA polymerase subunit beta' (1299 aa).

Residues Cys60, Cys62, Cys75, and Cys78 each contribute to the Zn(2+) site. The Mg(2+) site is built by Asp535, Asp537, and Asp539. Residues Cys877, Cys954, Cys961, and Cys964 each coordinate Zn(2+).

The protein belongs to the RNA polymerase beta' chain family. The RNAP catalytic core consists of 2 alpha, 1 beta, 1 beta' and 1 omega subunit. When a sigma factor is associated with the core the holoenzyme is formed, which can initiate transcription. Mg(2+) serves as cofactor. Zn(2+) is required as a cofactor.

The enzyme catalyses RNA(n) + a ribonucleoside 5'-triphosphate = RNA(n+1) + diphosphate. Its function is as follows. DNA-dependent RNA polymerase catalyzes the transcription of DNA into RNA using the four ribonucleoside triphosphates as substrates. The chain is DNA-directed RNA polymerase subunit beta' from Pseudarthrobacter chlorophenolicus (strain ATCC 700700 / DSM 12829 / CIP 107037 / JCM 12360 / KCTC 9906 / NCIMB 13794 / A6) (Arthrobacter chlorophenolicus).